Consider the following 407-residue polypeptide: Phosphopentomutase (407 aa).

Residues aspartate 10, aspartate 306, histidine 311, aspartate 347, histidine 348, and histidine 359 each contribute to the Mn(2+) site.

Belongs to the phosphopentomutase family. Mn(2+) is required as a cofactor.

The protein resides in the cytoplasm. It catalyses the reaction 2-deoxy-alpha-D-ribose 1-phosphate = 2-deoxy-D-ribose 5-phosphate. It carries out the reaction alpha-D-ribose 1-phosphate = D-ribose 5-phosphate. The protein operates within carbohydrate degradation; 2-deoxy-D-ribose 1-phosphate degradation; D-glyceraldehyde 3-phosphate and acetaldehyde from 2-deoxy-alpha-D-ribose 1-phosphate: step 1/2. Functionally, isomerase that catalyzes the conversion of deoxy-ribose 1-phosphate (dRib-1-P) and ribose 1-phosphate (Rib-1-P) to deoxy-ribose 5-phosphate (dRib-5-P) and ribose 5-phosphate (Rib-5-P), respectively. The chain is Phosphopentomutase from Salmonella paratyphi A (strain AKU_12601).